The primary structure comprises 539 residues: Putative dimethylaniline monooxygenase [N-oxide-forming] 6 (539 aa).

Residues 9–13 (GAGVS), glutamate 32, 40–41 (LW), and 61–62 (NS) contribute to the FAD site. 195-198 (SGSD) provides a ligand contact to NADP(+). A helical transmembrane segment spans residues 518 to 538 (FYNLLKMLSFPLLLLAVTLTF).

This sequence belongs to the FMO family. The cofactor is FAD.

It localises to the microsome membrane. Its subcellular location is the endoplasmic reticulum membrane. It catalyses the reaction N,N-dimethylaniline + NADPH + O2 + H(+) = N,N-dimethylaniline N-oxide + NADP(+) + H2O. It is probable that this protein is only produced in very small quantity or not at all as the gene coding for it seems to be unable to produce full-length transcripts. In Homo sapiens (Human), this protein is Putative dimethylaniline monooxygenase [N-oxide-forming] 6 (FMO6P).